The primary structure comprises 402 residues: Phosphoribulokinase, chloroplastic (402 aa).

A chloroplast-targeting transit peptide spans 1–51 (MAVCTVYTIPTTTHLGSSFNQNNKQVFFNYKRSSSSNNTLFTTRPSYVITC). A disulfide bridge connects residues C67 and C106.

The protein belongs to the phosphoribulokinase family.

It localises to the plastid. The protein localises to the chloroplast. It catalyses the reaction D-ribulose 5-phosphate + ATP = D-ribulose 1,5-bisphosphate + ADP + H(+). The protein operates within carbohydrate biosynthesis; Calvin cycle. Its activity is regulated as follows. Light regulated via thioredoxin by reversible oxidation/reduction of sulfhydryl/disulfide groups. In Spinacia oleracea (Spinach), this protein is Phosphoribulokinase, chloroplastic.